A 250-amino-acid polypeptide reads, in one-letter code: Ribosomal RNA small subunit methyltransferase J (250 aa).

Residues 101-102 (RD), 117-118 (ER), 153-154 (SS), and Asp171 each bind S-adenosyl-L-methionine.

It belongs to the methyltransferase superfamily. RsmJ family.

The protein resides in the cytoplasm. The catalysed reaction is guanosine(1516) in 16S rRNA + S-adenosyl-L-methionine = N(2)-methylguanosine(1516) in 16S rRNA + S-adenosyl-L-homocysteine + H(+). Functionally, specifically methylates the guanosine in position 1516 of 16S rRNA. The chain is Ribosomal RNA small subunit methyltransferase J from Shigella flexneri serotype 5b (strain 8401).